The sequence spans 855 residues: Suppressor of tumorigenicity 14 protein (855 aa).

The segment at 1–20 (MGSDRARKGGGGPKDFGAGL) is disordered. The Cytoplasmic portion of the chain corresponds to 1–55 (MGSDRARKGGGGPKDFGAGLKYNSRHEKVNGLEEGVEFLPVNNVKKVEKHGPGRW). A helical; Signal-anchor for type II membrane protein transmembrane segment spans residues 56–76 (VVLAAVLIGLLLVLLGIGFLV). The Extracellular portion of the chain corresponds to 77–855 (WHLQYRDVRV…RDWIKENTGV (779 aa)). The region spanning 86–203 (VQKVFNGYMR…TSVVAFPTDS (118 aa)) is the SEA domain. An N-linked (GlcNAc...) asparagine glycan is attached at Asn109. The cysteines at positions 214 and 244 are disulfide-linked. 2 consecutive CUB domains span residues 214 to 334 (CSFG…FFQL) and 340 to 447 (CGGR…YLSY). N-linked (GlcNAc...) asparagine glycosylation occurs at Asn302. 15 disulfides stabilise this stretch: Cys340–Cys366, Cys397–Cys410, Cys453–Cys464, Cys459–Cys477, Cys471–Cys486, Cys488–Cys501, Cys496–Cys514, Cys508–Cys523, Cys525–Cys537, Cys532–Cys550, Cys544–Cys559, Cys567–Cys579, Cys574–Cys593, Cys587–Cys602, and Cys641–Cys657. LDL-receptor class A domains lie at 452-487 (PCPGQFTCRTGRCIRKELRCDGWADCTDHSDELNCS), 487-524 (SCDAGHQFTCKNKFCKPLFWVCDSVNDCGDNSDEQGCS), 524-560 (SCPAQTFRCSNGKCLSKSQQCNGKDDCGDGSDEASCP), and 566-603 (TCTKHTYRCLNGLCLSKGNPECDGKEDCSDGSDEKDCD). Asn485 carries an N-linked (GlcNAc...) asparagine glycan. The Peptidase S1 domain occupies 615 to 854 (VVGGTDADEG…FRDWIKENTG (240 aa)). Catalysis depends on charge relay system residues His656 and Asp711. Asn772 is a glycosylation site (N-linked (GlcNAc...) asparagine). 2 disulfide bridges follow: Cys776–Cys790 and Cys801–Cys830. The active-site Charge relay system is Ser805.

It belongs to the peptidase S1 family. As to quaternary structure, interacts with CDCP1. May interact with TMEFF1. Interacts with iripin-3, a serine protease inhibitor from Ixodes ricinus saliva. Interacts with iripin-1, a serine protease inhibitor from Ixodes ricinus saliva.

It localises to the membrane. It carries out the reaction Cleaves various synthetic substrates with Arg or Lys at the P1 position and prefers small side-chain amino acids, such as Ala and Gly, at the P2 position.. In terms of biological role, exhibits trypsin-like activity as defined by cleavage of synthetic substrates with Arg or Lys as the P1 site. Involved in the terminal differentiation of keratinocytes through prostasin (PRSS8) activation and filaggrin (FLG) processing. Proteolytically cleaves and therefore activates TMPRSS13. This Homo sapiens (Human) protein is Suppressor of tumorigenicity 14 protein (ST14).